Reading from the N-terminus, the 129-residue chain is 3-aminoacrylate deaminase RutC (129 aa).

It belongs to the RutC family.

It catalyses the reaction (Z)-3-aminoacrylate + H2O + H(+) = 3-oxopropanoate + NH4(+). In terms of biological role, involved in pyrimidine catabolism. Catalyzes the deamination of 3-aminoacrylate to malonic semialdehyde, a reaction that can also occur spontaneously. RutC may facilitate the reaction and modulate the metabolic fitness, rather than catalyzing essential functions. In Yersinia enterocolitica serotype O:8 / biotype 1B (strain NCTC 13174 / 8081), this protein is 3-aminoacrylate deaminase RutC.